The chain runs to 292 residues: 5,10-methylenetetrahydrofolate reductase (292 aa).

Residue E26 is the Proton donor/acceptor of the active site. An NADH-binding site is contributed by T57. The FAD site is built by Y58, A60, H86, R116, G117, D118, A130, Y150, H154, A157, D163, N166, R169, and K170. (6S)-5-methyl-5,6,7,8-tetrahydrofolate is bound at residue D118. Q181 is a binding site for NADH. (6S)-5-methyl-5,6,7,8-tetrahydrofolate is bound by residues Q181, Q217, and R277.

This sequence belongs to the methylenetetrahydrofolate reductase family. Requires FAD as cofactor.

It catalyses the reaction (6S)-5-methyl-5,6,7,8-tetrahydrofolate + NAD(+) = (6R)-5,10-methylene-5,6,7,8-tetrahydrofolate + NADH + H(+). It functions in the pathway one-carbon metabolism; tetrahydrofolate interconversion. It participates in amino-acid biosynthesis; L-methionine biosynthesis via de novo pathway. In terms of biological role, catalyzes the NADH-dependent reduction of 5,10-methylenetetrahydrofolate to 5-methyltetrahydrofolate. Is required to provide the methyl group necessary for methionine synthetase to convert homocysteine to methionine; the methyl group is given by 5-methyltetrahydrofolate. The protein is 5,10-methylenetetrahydrofolate reductase (metF) of Haemophilus influenzae (strain ATCC 51907 / DSM 11121 / KW20 / Rd).